The primary structure comprises 177 residues: RNA silencing suppressor (177 aa).

Homooctamer. The eight monomers assemble into a closed ring that binds RNA.

The protein resides in the host cytoplasm. In terms of biological role, acts as a suppressor of RNA-mediated gene silencing, also known as post-transcriptional gene silencing (PTGS), a mechanism of plant viral defense that limits the accumulation of viral RNAs. Binds to ssRNAs and dsRNAs in vitro. Also functions as a replication enhancer. The polypeptide is RNA silencing suppressor (Beta vulgaris (Sugar beet)).